Here is a 78-residue protein sequence, read N- to C-terminus: Large ribosomal subunit protein bL28 (78 aa).

The disordered stretch occupies residues methionine 1–alanine 21.

This sequence belongs to the bacterial ribosomal protein bL28 family.

This chain is Large ribosomal subunit protein bL28, found in Shewanella loihica (strain ATCC BAA-1088 / PV-4).